The sequence spans 438 residues: Protein c-ets-1-A (438 aa).

The 86-residue stretch at 49–134 folds into the PNT domain; that stretch reads ATFSRFTKEQ…EHLEILQKDS (86 aa). Positions 128–240 are activation domain; required for transcription activation; sequence EILQKDSKQY…DNMCLGRISR (113 aa). Residues 301–309 form a helix HI-1 region; it reads FKDYVRDRA. The interval 320 to 327 is helix HI-2; it reads AAALAGYT. The ETS DNA-binding region spans 332–412; sequence IQLWQFLLEL…AGKRYVYRFV (81 aa). The helix H4 stretch occupies residues 415–419; that stretch reads LQSLL. A helix H5 region spans residues 423–429; it reads PEELHAM.

This sequence belongs to the ETS family. Binds DNA as a homodimer; homodimerization is required for transcription activation.

It is found in the nucleus. Its subcellular location is the cytoplasm. Autoinhibited by a module composed of four alpha helices (HI-1, HI-2, H4, and H5) that flank the DNA-binding ETS domain, reducing the affinity for DNA. Its function is as follows. Transcription factor. Directly controls the expression of cytokine and chemokine genes in a wide variety of different cellular contexts. This chain is Protein c-ets-1-A (ets1-a), found in Xenopus laevis (African clawed frog).